We begin with the raw amino-acid sequence, 123 residues long: MPTINQLIRNTRQPIRNVTKSPALRGCPQRRGTCTRVYTITPKKPNSALRKVARVRLTSGFEITAYIPGIGHNLQEHSVVLVRGGRVKDLPGVRYHIVRGTLDAVGVKDRQQGRSKYGVKKPK.

This sequence belongs to the universal ribosomal protein uS12 family. In terms of assembly, part of the 30S ribosomal subunit.

It localises to the plastid. The protein localises to the chloroplast. In terms of biological role, with S4 and S5 plays an important role in translational accuracy. Located at the interface of the 30S and 50S subunits. This is Small ribosomal subunit protein uS12cz/uS12cy (rps12-A) from Atropa belladonna (Belladonna).